The sequence spans 304 residues: Quinolinate synthase (304 aa).

2 residues coordinate iminosuccinate: histidine 23 and serine 40. Cysteine 85 is a [4Fe-4S] cluster binding site. Iminosuccinate is bound by residues 111–113 (YVN) and serine 128. Cysteine 171 is a [4Fe-4S] cluster binding site. Residues 197-199 (HPE) and threonine 214 contribute to the iminosuccinate site. A [4Fe-4S] cluster-binding site is contributed by cysteine 259.

This sequence belongs to the quinolinate synthase family. Type 2 subfamily. The cofactor is [4Fe-4S] cluster.

The protein localises to the cytoplasm. It carries out the reaction iminosuccinate + dihydroxyacetone phosphate = quinolinate + phosphate + 2 H2O + H(+). Its pathway is cofactor biosynthesis; NAD(+) biosynthesis; quinolinate from iminoaspartate: step 1/1. Its function is as follows. Catalyzes the condensation of iminoaspartate with dihydroxyacetone phosphate to form quinolinate. This is Quinolinate synthase from Pelobacter propionicus (strain DSM 2379 / NBRC 103807 / OttBd1).